Consider the following 457-residue polypeptide: tRNA-2-methylthio-N(6)-dimethylallyladenosine synthase (457 aa).

The 118-residue stretch at 3–120 (KKVYVKTFGC…LPQMIDQRRA (118 aa)) folds into the MTTase N-terminal domain. [4Fe-4S] cluster is bound by residues cysteine 12, cysteine 49, cysteine 83, cysteine 157, cysteine 161, and cysteine 164. Residues 143–377 (RVEGPSAFVS…QATIEENVAR (235 aa)) enclose the Radical SAM core domain. A TRAM domain is found at 380–447 (RSMVGKVERI…PHSLRGELLL (68 aa)).

It belongs to the methylthiotransferase family. MiaB subfamily. In terms of assembly, monomer. It depends on [4Fe-4S] cluster as a cofactor.

It localises to the cytoplasm. It carries out the reaction N(6)-dimethylallyladenosine(37) in tRNA + (sulfur carrier)-SH + AH2 + 2 S-adenosyl-L-methionine = 2-methylsulfanyl-N(6)-dimethylallyladenosine(37) in tRNA + (sulfur carrier)-H + 5'-deoxyadenosine + L-methionine + A + S-adenosyl-L-homocysteine + 2 H(+). Its function is as follows. Catalyzes the methylthiolation of N6-(dimethylallyl)adenosine (i(6)A), leading to the formation of 2-methylthio-N6-(dimethylallyl)adenosine (ms(2)i(6)A) at position 37 in tRNAs that read codons beginning with uridine. This Burkholderia ambifaria (strain ATCC BAA-244 / DSM 16087 / CCUG 44356 / LMG 19182 / AMMD) (Burkholderia cepacia (strain AMMD)) protein is tRNA-2-methylthio-N(6)-dimethylallyladenosine synthase.